A 292-amino-acid chain; its full sequence is DSC E3 ubiquitin ligase complex subunit 3 (292 aa).

Topologically, residues 1 to 243 (MSAEPLLPTH…PIANIKHNKD (243 aa)) are extracellular. N-linked (GlcNAc...) asparagine glycosylation is found at N11, N41, N77, N99, and N145. Residues 244-264 (LLLGICVGFFFGVFGILLMKF) traverse the membrane as a helical segment. The Cytoplasmic portion of the chain corresponds to 265–273 (DGLFNRRQK). Residues 274–291 (MAIFAGVIVNVMFCLVRG) traverse the membrane as a helical segment. Residue F292 is a topological domain, extracellular.

It belongs to the dsc3 family. As to quaternary structure, component of the DSC E3 ligase complexes composed of at least TUL1, DSC2, DSC3, UBX3, CDC48 as well as VLD1 for the vacuole-localized complex or GLD1 for the Golgi/endosome-localized complex.

It localises to the endoplasmic reticulum membrane. Its function is as follows. Component of the DSC E3 ubiquitin ligase complexes that tag proteins present in Golgi, endosome and vacuole membranes and function in protein homeostasis under non-stress conditions and support a role in protein quality control. Involved in endocytic protein trafficking. The sequence is that of DSC E3 ubiquitin ligase complex subunit 3 from Saccharomyces cerevisiae (strain ATCC 204508 / S288c) (Baker's yeast).